A 170-amino-acid polypeptide reads, in one-letter code: MDFKQHIAIVPDYPKEGIVFKDITPLMNDGKAYKAATDAIVEYAKERDIDLVVGPEARGFIIGCPVSYALEVGFAPVRKLGKLPREVITVDYGKEYGKDVLTIHKDAIKPGQRVLITDDLLATGGTIEATIKLVEELGGVVAGIAFLVELTYLDGRKMLDGYDVLVLEKY.

It belongs to the purine/pyrimidine phosphoribosyltransferase family. Homodimer.

It localises to the cytoplasm. It carries out the reaction AMP + diphosphate = 5-phospho-alpha-D-ribose 1-diphosphate + adenine. Its pathway is purine metabolism; AMP biosynthesis via salvage pathway; AMP from adenine: step 1/1. In terms of biological role, catalyzes a salvage reaction resulting in the formation of AMP, that is energically less costly than de novo synthesis. This chain is Adenine phosphoribosyltransferase, found in Bacillus anthracis (strain A0248).